Here is a 172-residue protein sequence, read N- to C-terminus: Shikimate kinase (172 aa).

14–19 (GAGKST) is a binding site for ATP. Serine 18 contacts Mg(2+). Residues aspartate 36, arginine 60, and glycine 82 each coordinate substrate. Residue arginine 120 participates in ATP binding. Position 140 (arginine 140) interacts with substrate. Glutamine 157 is a binding site for ATP.

It belongs to the shikimate kinase family. In terms of assembly, monomer. It depends on Mg(2+) as a cofactor.

The protein localises to the cytoplasm. It catalyses the reaction shikimate + ATP = 3-phosphoshikimate + ADP + H(+). Its pathway is metabolic intermediate biosynthesis; chorismate biosynthesis; chorismate from D-erythrose 4-phosphate and phosphoenolpyruvate: step 5/7. Functionally, catalyzes the specific phosphorylation of the 3-hydroxyl group of shikimic acid using ATP as a cosubstrate. This chain is Shikimate kinase, found in Colwellia psychrerythraea (strain 34H / ATCC BAA-681) (Vibrio psychroerythus).